Here is a 125-residue protein sequence, read N- to C-terminus: Small ribosomal subunit protein uS12 (125 aa).

The interval 9–31 is disordered; that stretch reads RQGREVEKIKSKSPAMENSPQRR. Asp-89 is subject to 3-methylthioaspartic acid. Positions 105 to 125 are disordered; sequence QGVKDRKQSRSKYGAKRPKAK. Residues 113–125 show a composition bias toward basic residues; that stretch reads SRSKYGAKRPKAK.

This sequence belongs to the universal ribosomal protein uS12 family. Part of the 30S ribosomal subunit. Contacts proteins S8 and S17. May interact with IF1 in the 30S initiation complex.

Functionally, with S4 and S5 plays an important role in translational accuracy. Its function is as follows. Interacts with and stabilizes bases of the 16S rRNA that are involved in tRNA selection in the A site and with the mRNA backbone. Located at the interface of the 30S and 50S subunits, it traverses the body of the 30S subunit contacting proteins on the other side and probably holding the rRNA structure together. The combined cluster of proteins S8, S12 and S17 appears to hold together the shoulder and platform of the 30S subunit. This is Small ribosomal subunit protein uS12 from Polaromonas naphthalenivorans (strain CJ2).